The primary structure comprises 602 residues: GTP-binding protein 1 (602 aa).

A Phosphoserine modification is found at Ser2. A tr-type G domain is found at 91–322 (FLEVRVAVVG…LNLLSPRTSY (232 aa)). Residues 100 to 107 (GNVDAGKS) are G1. GTP is bound at residue 100–107 (GNVDAGKS). Residues 139–143 (GRTSS) form a G2 region. The G3 stretch occupies residues 185 to 188 (DLAG). Residues 185–189 (DLAGH) and 241–244 (TKID) contribute to the GTP site. The interval 241–244 (TKID) is G4. Residues 299–301 (SNV) form a G5 region. Residues 506-528 (LLQTTNNSPMNSKPQQIKMQSTK) show a composition bias toward polar residues. The segment at 506–602 (LLQTTNNSPM…GACVTPASGC (97 aa)) is disordered. At Ser513 the chain carries Phosphoserine. The span at 579-589 (GRRRGGQRYKV) shows a compositional bias: basic residues.

It belongs to the TRAFAC class translation factor GTPase superfamily. Classic translation factor GTPase family. GTPBP1 subfamily. Interacts with EXOSC2/RRP4, EXOSC3/RRP40, EXOSC5/RRP46, HNRNPD, HNRNPR and SYNCRIP. Identified in a complex with AANAT mRNA, but does not bind mRNA by itself.

The protein resides in the cytoplasm. In terms of biological role, promotes degradation of target mRNA species. Plays a role in the regulation of circadian mRNA stability. Binds GTP and has GTPase activity. This Pongo abelii (Sumatran orangutan) protein is GTP-binding protein 1 (GTPBP1).